The primary structure comprises 188 residues: MGIKSDRWIRKMAREHGMIEPFEPHQVRHGDCSSVISYGTSSYGYDVRCSNEFKIFTNINSAIVDPKNFDQNSFVDLVSDVCIIPPNSFALARTVEYFRIPRDVLTICLGKSTYARCGIIVNVTPLEPEWEGHVTLEFSNTTPLPAKIYANEGVAQVLFLGADDVCETSYRDRSGKYQGQTGVTLPKA.

Residues 111–116 (KSTYAR), 135–137 (TLE), glutamine 156, tyrosine 170, and glutamine 180 contribute to the dCTP site. Glutamate 137 functions as the Proton donor/acceptor in the catalytic mechanism.

It belongs to the dCTP deaminase family. Homotrimer.

The enzyme catalyses dCTP + H2O + H(+) = dUTP + NH4(+). It functions in the pathway pyrimidine metabolism; dUMP biosynthesis; dUMP from dCTP (dUTP route): step 1/2. Its function is as follows. Catalyzes the deamination of dCTP to dUTP. This is dCTP deaminase from Methylococcus capsulatus (strain ATCC 33009 / NCIMB 11132 / Bath).